We begin with the raw amino-acid sequence, 241 residues long: 1-(5-phosphoribosyl)-5-[(5-phosphoribosylamino)methylideneamino] imidazole-4-carboxamide isomerase (241 aa).

Residue Asp10 is the Proton acceptor of the active site. Asp131 acts as the Proton donor in catalysis.

It belongs to the HisA/HisF family.

The protein localises to the cytoplasm. The catalysed reaction is 1-(5-phospho-beta-D-ribosyl)-5-[(5-phospho-beta-D-ribosylamino)methylideneamino]imidazole-4-carboxamide = 5-[(5-phospho-1-deoxy-D-ribulos-1-ylimino)methylamino]-1-(5-phospho-beta-D-ribosyl)imidazole-4-carboxamide. It functions in the pathway amino-acid biosynthesis; L-histidine biosynthesis; L-histidine from 5-phospho-alpha-D-ribose 1-diphosphate: step 4/9. The chain is 1-(5-phosphoribosyl)-5-[(5-phosphoribosylamino)methylideneamino] imidazole-4-carboxamide isomerase from Bifidobacterium longum (strain NCC 2705).